A 148-amino-acid polypeptide reads, in one-letter code: Photosystem I reaction center subunit XI (148 aa).

The next 3 membrane-spanning stretches (helical) occupy residues 48–68, 73–93, and 122–142; these read LEIGLAHGYFLIGPFAQLGPL, IGLLAGFLSTIGLILILTLGL, and GGFFVGACGSAGFAFICLSSI.

The protein belongs to the PsaL family.

It localises to the plastid. Its subcellular location is the chloroplast thylakoid membrane. The protein is Photosystem I reaction center subunit XI of Thalassiosira pseudonana (Marine diatom).